We begin with the raw amino-acid sequence, 274 residues long: Diaminopimelate epimerase (274 aa).

Substrate-binding residues include Asn11, Gln44, and Asn64. Cys73 functions as the Proton donor in the catalytic mechanism. Residues 74 to 75 (GN), Asn157, Asn190, and 208 to 209 (ER) each bind substrate. Cys217 functions as the Proton acceptor in the catalytic mechanism. 218-219 (GS) provides a ligand contact to substrate.

It belongs to the diaminopimelate epimerase family. Homodimer.

The protein resides in the cytoplasm. The catalysed reaction is (2S,6S)-2,6-diaminopimelate = meso-2,6-diaminopimelate. The protein operates within amino-acid biosynthesis; L-lysine biosynthesis via DAP pathway; DL-2,6-diaminopimelate from LL-2,6-diaminopimelate: step 1/1. Catalyzes the stereoinversion of LL-2,6-diaminopimelate (L,L-DAP) to meso-diaminopimelate (meso-DAP), a precursor of L-lysine and an essential component of the bacterial peptidoglycan. This chain is Diaminopimelate epimerase, found in Escherichia fergusonii (strain ATCC 35469 / DSM 13698 / CCUG 18766 / IAM 14443 / JCM 21226 / LMG 7866 / NBRC 102419 / NCTC 12128 / CDC 0568-73).